Here is a 138-residue protein sequence, read N- to C-terminus: Putative pre-16S rRNA nuclease (138 aa).

The protein belongs to the YqgF nuclease family.

It localises to the cytoplasm. Functionally, could be a nuclease involved in processing of the 5'-end of pre-16S rRNA. The polypeptide is Putative pre-16S rRNA nuclease (Bacteroides fragilis (strain ATCC 25285 / DSM 2151 / CCUG 4856 / JCM 11019 / LMG 10263 / NCTC 9343 / Onslow / VPI 2553 / EN-2)).